The primary structure comprises 292 residues: Protease HtpX homolog (292 aa).

The next 2 helical transmembrane spans lie at 9–29 (TGVLMAFLTGLLMAIGYVLGN) and 31–51 (TGMMFAFMFALVMNFFSYWYS). H133 provides a ligand contact to Zn(2+). E134 is an active-site residue. Residue H137 participates in Zn(2+) binding. Helical transmembrane passes span 148–168 (LAAVMAGAIMMVARWAGWMLW) and 185–205 (LGAILLIVLAPIAAMLIQMAI). E210 serves as a coordination point for Zn(2+).

It belongs to the peptidase M48B family. Zn(2+) serves as cofactor.

The protein resides in the cell membrane. This Thermococcus sibiricus (strain DSM 12597 / MM 739) protein is Protease HtpX homolog.